The following is an 847-amino-acid chain: Leucine--tRNA ligase (847 aa).

A 'HIGH' region motif is present at residues 41-51 (PYPSGRIHMGH). The short motif at 619-623 (KMSKS) is the 'KMSKS' region element. Lysine 622 lines the ATP pocket.

It belongs to the class-I aminoacyl-tRNA synthetase family.

The protein localises to the cytoplasm. It catalyses the reaction tRNA(Leu) + L-leucine + ATP = L-leucyl-tRNA(Leu) + AMP + diphosphate. The chain is Leucine--tRNA ligase from Cereibacter sphaeroides (strain ATCC 17029 / ATH 2.4.9) (Rhodobacter sphaeroides).